A 257-amino-acid polypeptide reads, in one-letter code: Imidazole glycerol phosphate synthase subunit HisF (257 aa).

Catalysis depends on residues Asp12 and Asp131.

It belongs to the HisA/HisF family. As to quaternary structure, heterodimer of HisH and HisF.

The protein localises to the cytoplasm. The enzyme catalyses 5-[(5-phospho-1-deoxy-D-ribulos-1-ylimino)methylamino]-1-(5-phospho-beta-D-ribosyl)imidazole-4-carboxamide + L-glutamine = D-erythro-1-(imidazol-4-yl)glycerol 3-phosphate + 5-amino-1-(5-phospho-beta-D-ribosyl)imidazole-4-carboxamide + L-glutamate + H(+). It participates in amino-acid biosynthesis; L-histidine biosynthesis; L-histidine from 5-phospho-alpha-D-ribose 1-diphosphate: step 5/9. Its function is as follows. IGPS catalyzes the conversion of PRFAR and glutamine to IGP, AICAR and glutamate. The HisF subunit catalyzes the cyclization activity that produces IGP and AICAR from PRFAR using the ammonia provided by the HisH subunit. The polypeptide is Imidazole glycerol phosphate synthase subunit HisF (Burkholderia orbicola (strain MC0-3)).